Here is a 281-residue protein sequence, read N- to C-terminus: Urease accessory protein UreD 2 (281 aa).

It belongs to the UreD family. As to quaternary structure, ureD, UreF and UreG form a complex that acts as a GTP-hydrolysis-dependent molecular chaperone, activating the urease apoprotein by helping to assemble the nickel containing metallocenter of UreC. The UreE protein probably delivers the nickel.

It localises to the cytoplasm. Functionally, required for maturation of urease via the functional incorporation of the urease nickel metallocenter. The protein is Urease accessory protein UreD 2 of Pseudomonas syringae pv. tomato (strain ATCC BAA-871 / DC3000).